The following is a 477-amino-acid chain: Glycogen synthase (477 aa).

K15 contributes to the ADP-alpha-D-glucose binding site.

Belongs to the glycosyltransferase 1 family. Bacterial/plant glycogen synthase subfamily.

The enzyme catalyses [(1-&gt;4)-alpha-D-glucosyl](n) + ADP-alpha-D-glucose = [(1-&gt;4)-alpha-D-glucosyl](n+1) + ADP + H(+). The protein operates within glycan biosynthesis; glycogen biosynthesis. Synthesizes alpha-1,4-glucan chains using ADP-glucose. The polypeptide is Glycogen synthase (Streptococcus pneumoniae serotype 4 (strain ATCC BAA-334 / TIGR4)).